Reading from the N-terminus, the 173-residue chain is Inorganic pyrophosphatase (173 aa).

Substrate contacts are provided by K28, R42, and Y54. D64, D69, and D101 together coordinate Mg(2+). Substrate is bound at residue Y140.

It belongs to the PPase family. Homohexamer. Mg(2+) serves as cofactor.

It is found in the cytoplasm. It catalyses the reaction diphosphate + H2O = 2 phosphate + H(+). In terms of biological role, catalyzes the hydrolysis of inorganic pyrophosphate (PPi) forming two phosphate ions. The chain is Inorganic pyrophosphatase from Helicobacter pylori (strain J99 / ATCC 700824) (Campylobacter pylori J99).